Reading from the N-terminus, the 1453-residue chain is Chromatin remodeling regulator CECR2 (1453 aa).

The tract at residues 170-237 (VQGRSNGELS…DLQTRNGSRG (68 aa)) is disordered. The segment covering 197–209 (TGKRRGRPPKRKK) has biased composition (basic residues). Positions 210-222 (LQEEIISSEKQEE) are enriched in basic and acidic residues. The span at 223–234 (NSLTSDLQTRNG) shows a compositional bias: polar residues. Phosphoserine is present on serine 402. A Bromo domain is found at 414 to 518 (FELDDDFTAM…RCFHRAMTKH (105 aa)). Threonine 526 is subject to Phosphothreonine. Disordered regions lie at residues 536 to 667 (EKRE…HPPF), 767 to 796 (HGTTNPGRLGPDEKPHLGPGPSHHPHTLGH), 827 to 868 (GYMQ…GESM), 884 to 1020 (VCPP…DNSY), 1046 to 1072 (VVGEASPCRSEGKGLDGSGSEKPLCPR), 1131 to 1308 (LASM…YLYG), 1331 to 1368 (MLQTGSPYTPQRSASHFQPRAYPSPVPAHPPPHPVATQ), and 1396 to 1453 (QTGT…LDQS). Position 551 is a phosphoserine (serine 551). Positions 637 to 649 (GSLQGSDPTNLHG) are enriched in polar residues. The span at 655–664 (EAPPGEPLQH) shows a compositional bias: pro residues. A compositionally biased stretch (pro residues) spans 887–905 (PGVPYHPRQPTPPQLPGPF). Position 983 is a phosphoserine (serine 983). Over residues 985–998 (QERETEDSQLKSDA) the composition is skewed to basic and acidic residues. Polar residues predominate over residues 999–1020 (SDSADTYKTSKNKNTWPLDNSY). An asymmetric dimethylarginine mark is found at arginine 1166 and arginine 1172. Composition is skewed to low complexity over residues 1173–1187 (YSYQPPSQPSYHPYQ) and 1202–1211 (QRSLPSQRSP). Over residues 1228 to 1250 (NVLSSLQGCETLNTALTSPTQMD) the composition is skewed to polar residues. A compositionally biased stretch (basic and acidic residues) spans 1265–1289 (GPEEEKMDESVERPESPKEFLDLDN). Serine 1280 bears the Phosphoserine mark. Composition is skewed to polar residues over residues 1291–1304 (NAATKRQNSLSTSD) and 1331–1346 (MLQTGSPYTPQRSASH). The span at 1352 to 1364 (YPSPVPAHPPPHP) shows a compositional bias: pro residues.

Component of the CERF-1 ISWI chromatin remodeling complex (also called the CECR2-containing remodeling factor (CERF) complex) at least composed of CECR2 and SMARCA1. Component of the CERF-5 ISWI chromatin remodeling complex at least composed of CECR2 and SMARCA5/SNF2H. LUZP1 is detected as part of the CERF-1 and CERF-5 complexes in embryonic stem (ES) cells where it is involved in complex stabilization but is not detected in the complexes in the testis. Interacts with CCAR2; CCAR2 may form part of the CERF-1 and/or CEF-5 ISWI chromatin remodeling complexes in ES cells. Interacts with acetylated lysine residues on histone H2A and H3 (in vitro). Interacts with LRPPRC.

It localises to the nucleus. In terms of biological role, regulatory subunit of the ATP-dependent CERF-1 and CERF-5 ISWI chromatin remodeling complexes, which form ordered nucleosome arrays on chromatin and facilitate access to DNA during DNA-templated processes such as DNA replication, transcription, and repair. The complexes do not have the ability to slide mononucleosomes to the center of a DNA template. The CERF-1 ISWI chromatin remodeling complex has a lower ATP hydrolysis rate than the CERF-5 ISWI chromatin remodeling complex. Plays a role in various processes during development: required during embryogenesis for neural tube closure and inner ear development. In adults, required for spermatogenesis, via the formation of ISWI-type chromatin complexes. In histone-modifying complexes, CECR2 recognizes and binds acylated histones: binds histones that are acetylated and/or butyrylated. May also be involved through its interaction with LRPPRC in the integration of cytoskeletal network with vesicular trafficking, nucleocytosolic shuttling, transcription, chromosome remodeling and cytokinesis. The protein is Chromatin remodeling regulator CECR2 of Mus musculus (Mouse).